Consider the following 346-residue polypeptide: Cyclin-dependent kinase 20 (346 aa).

Residues 4–288 (YCILGRIGEG…ASQALLHQYF (285 aa)) enclose the Protein kinase domain. ATP is bound by residues 10–18 (IGEGAHGIV) and Lys33. Residue Asp127 is the Proton acceptor of the active site. The interval 298–324 (SELPIPQRPGGPAPKAHPGPPHVHDFH) is disordered. A compositionally biased stretch (pro residues) spans 303–318 (PQRPGGPAPKAHPGPP).

The protein belongs to the protein kinase superfamily. CMGC Ser/Thr protein kinase family. CDC2/CDKX subfamily. In terms of assembly, monomer. Interacts with MAK. Interacts with TBC1D32.

The protein resides in the nucleus. The protein localises to the cytoplasm. It is found in the cell projection. Its subcellular location is the cilium. It catalyses the reaction L-seryl-[protein] + ATP = O-phospho-L-seryl-[protein] + ADP + H(+). It carries out the reaction L-threonyl-[protein] + ATP = O-phospho-L-threonyl-[protein] + ADP + H(+). In terms of biological role, involved in cell growth. Activates CDK2, a kinase involved in the control of the cell cycle, by phosphorylating residue 'Thr-160'. Required for high-level Shh responses in the developing neural tube. Together with TBC1D32, controls the structure of the primary cilium by coordinating assembly of the ciliary membrane and axoneme, allowing GLI2 to be properly activated in response to SHH signaling. The chain is Cyclin-dependent kinase 20 (Cdk20) from Mus musculus (Mouse).